The chain runs to 312 residues: Aspartate carbamoyltransferase catalytic subunit (312 aa).

Residues arginine 58 and threonine 59 each contribute to the carbamoyl phosphate site. Lysine 86 provides a ligand contact to L-aspartate. The carbamoyl phosphate site is built by arginine 108, histidine 136, and glutamine 139. Residues arginine 169 and arginine 223 each coordinate L-aspartate. Residues glycine 264 and proline 265 each coordinate carbamoyl phosphate.

It belongs to the aspartate/ornithine carbamoyltransferase superfamily. ATCase family. As to quaternary structure, heterododecamer (2C3:3R2) of six catalytic PyrB chains organized as two trimers (C3), and six regulatory PyrI chains organized as three dimers (R2).

It carries out the reaction carbamoyl phosphate + L-aspartate = N-carbamoyl-L-aspartate + phosphate + H(+). The protein operates within pyrimidine metabolism; UMP biosynthesis via de novo pathway; (S)-dihydroorotate from bicarbonate: step 2/3. Functionally, catalyzes the condensation of carbamoyl phosphate and aspartate to form carbamoyl aspartate and inorganic phosphate, the committed step in the de novo pyrimidine nucleotide biosynthesis pathway. The protein is Aspartate carbamoyltransferase catalytic subunit of Syntrophomonas wolfei subsp. wolfei (strain DSM 2245B / Goettingen).